Reading from the N-terminus, the 130-residue chain is Hydrogenase maturation factor HypA (130 aa).

His-2 lines the Ni(2+) pocket. Positions 74, 77, 90, and 93 each coordinate Zn(2+).

The protein belongs to the HypA/HybF family.

Its function is as follows. Involved in the maturation of [NiFe] hydrogenases. Required for nickel insertion into the metal center of the hydrogenase. The polypeptide is Hydrogenase maturation factor HypA (Desulfatibacillum aliphaticivorans).